A 635-amino-acid chain; its full sequence is Early transcription factor 70 kDa subunit (635 aa).

A Helicase ATP-binding domain is found at 32–185 (RSIIDENKSV…SNIISLMSDE (154 aa)). 45 to 52 (HIMGSGKT) is an ATP binding site. Positions 135 to 138 (DEAH) match the DEXH box motif. Residues 326-505 (KFKYFIGKIT…TLPFDIKKLL (180 aa)) enclose the Helicase C-terminal domain.

Belongs to the helicase family. VETF subfamily. In terms of assembly, heterodimer of a 70 kDa and a 82 kDa subunit.

The protein localises to the virion. Functionally, acts with RNA polymerase to initiate transcription from early gene promoters. A DNA-dependent ATPase activity is associated with VETF. This chain is Early transcription factor 70 kDa subunit (VETFS), found in Erythrocebus patas (Red guenon).